The following is a 410-amino-acid chain: Argininosuccinate synthase (410 aa).

10-18 (AYSGGLDTS) provides a ligand contact to ATP. Y88 and S93 together coordinate L-citrulline. ATP is bound at residue G118. L-aspartate is bound by residues T120, N124, and D125. An L-citrulline-binding site is contributed by N124. L-citrulline is bound by residues R128, S177, S186, E262, and Y274.

Belongs to the argininosuccinate synthase family. Type 1 subfamily. As to quaternary structure, homotetramer.

It is found in the cytoplasm. It carries out the reaction L-citrulline + L-aspartate + ATP = 2-(N(omega)-L-arginino)succinate + AMP + diphosphate + H(+). Its pathway is amino-acid biosynthesis; L-arginine biosynthesis; L-arginine from L-ornithine and carbamoyl phosphate: step 2/3. This chain is Argininosuccinate synthase, found in Thermoanaerobacter pseudethanolicus (strain ATCC 33223 / 39E) (Clostridium thermohydrosulfuricum).